Here is a 644-residue protein sequence, read N- to C-terminus: Far upstream element-binding protein 1 (644 aa).

Disordered regions lie at residues methionine 1–phenylalanine 31 and lysine 44–glutamine 94. At alanine 2 the chain carries N-acetylalanine. A compositionally biased stretch (gly residues) spans serine 14–valine 27. 2 positions are modified to phosphoserine: serine 52 and serine 55. Residues arginine 65–lysine 77 show a composition bias toward basic and acidic residues. The segment covering glutamine 81–glutamine 94 has biased composition (polar residues). KH domains are found at residues valine 100–leucine 164, asparagine 185–valine 251, and asparagine 275–isoleucine 339. Serine 140 is modified (phosphoserine). Position 153 is a phosphothreonine (threonine 153). Residues arginine 321, arginine 359, arginine 361, and arginine 363 each carry the omega-N-methylarginine modification. The segment at valine 346 to glutamine 365 is disordered. Gly residues predominate over residues asparagine 350–glutamine 365. The region spanning leucine 376 to isoleucine 443 is the KH 4 domain. The residue at position 432 (threonine 432) is a Phosphothreonine. 2 disordered regions span residues isoleucine 447 to proline 532 and glutamine 548 to valine 580. The segment covering proline 468–tyrosine 505 has biased composition (pro residues). Over residues proline 556–asparagine 573 the composition is skewed to low complexity. At serine 630 the chain carries Phosphoserine.

As to quaternary structure, found in a complex with PUF60 and far upstream element (FUSE) DNA segment. Interacts with PUF60 and JTV1. Post-translationally, ubiquitinated. This targets the protein for proteasome-mediated degradation.

It is found in the nucleus. Regulates MYC expression by binding to a single-stranded far-upstream element (FUSE) upstream of the MYC promoter. May act both as activator and repressor of transcription. In Homo sapiens (Human), this protein is Far upstream element-binding protein 1 (FUBP1).